A 463-amino-acid chain; its full sequence is Glutamate--tRNA ligase (463 aa).

The 'HIGH' region signature appears at 9 to 19; the sequence is PSPTGYLHVGG. Residues 115–129 are compositionally biased toward basic and acidic residues; that stretch reads AGEKPRYDGTWRPEA. Positions 115-136 are disordered; it reads AGEKPRYDGTWRPEAGKTLPAI. The 'KMSKS' region motif lies at 241–245; it reads KLSKR. Lys244 serves as a coordination point for ATP.

This sequence belongs to the class-I aminoacyl-tRNA synthetase family. Glutamate--tRNA ligase type 1 subfamily. In terms of assembly, monomer.

The protein localises to the cytoplasm. It catalyses the reaction tRNA(Glu) + L-glutamate + ATP = L-glutamyl-tRNA(Glu) + AMP + diphosphate. In terms of biological role, catalyzes the attachment of glutamate to tRNA(Glu) in a two-step reaction: glutamate is first activated by ATP to form Glu-AMP and then transferred to the acceptor end of tRNA(Glu). The chain is Glutamate--tRNA ligase from Janthinobacterium sp. (strain Marseille) (Minibacterium massiliensis).